Here is a 585-residue protein sequence, read N- to C-terminus: MAGUK p55 subfamily member 3 (585 aa).

2 consecutive L27 domains span residues 6 to 60 and 61 to 118; these read EDSG…ERQS and PTPV…FDPV. The region spanning 137–212 is the PDZ domain; sequence IVRLVKNKEP…LAQSQGSITL (76 aa). The SH3 domain maps to 226–296; the sequence is ESKVFMRALF…PSKGFQERRL (71 aa). At serine 307 the chain carries Phosphoserine. The Guanylate kinase-like domain occupies 385–570; sequence PRLVVLIGSL…AYSQLKVVLE (186 aa).

The protein belongs to the MAGUK family. As to quaternary structure, interacts with HTR2C; this interaction stabilizes the receptor at the plasma membrane and prevents the desensitization of the HTR2C receptor-mediated calcium response. Interacts with HTR2A. Interacts with HTR4. Interacts (via PDZ domain) with CADM1 (via C-terminus)Interacts (via PDZ domain) with CADM1; this interaction connects CADM1 with DLG1. Interacts (via Guanylate kinase-like domain) with PALS1. Interacts with DLG1 (via N-terminus); this interaction connects CADM1 with DLG1 and links CADM1 with the regulatory subunit of phosphoinositide-3-kinase (PI3K) by forming a multiprotein complex and participates in cell spreading. As to expression, expressed in retina (at protein level) at the subapical region (SAR) adjacent to adherens junctions at the OLM, and at the OPL.

The protein resides in the cell membrane. It localises to the apical cell membrane. The protein localises to the cell junction. It is found in the adherens junction. Functionally, participates in cell spreading through the phosphoinositide-3-kinase (PI3K) pathway by connecting CADM1 to DLG1 and the regulatory subunit of phosphoinositide-3-kinase (PI3K). Stabilizes HTR2C at the plasma membrane and prevents its desensitization. May participates in the maintenance of adherens junctions. This is MAGUK p55 subfamily member 3 from Homo sapiens (Human).